Here is a 339-residue protein sequence, read N- to C-terminus: Trace amine-associated receptor 2 (339 aa).

Topologically, residues 1 to 36 (MASFEAQQETFDCSEYGNGSCPENERSLGVRAAMYS) are extracellular. N-linked (GlcNAc...) asparagine glycosylation is present at N18. Disulfide bonds link C21–C185 and C104–C189. Residues 37-57 (LMACAIFITIFGNLAMIISIS) form a helical membrane-spanning segment. The Cytoplasmic portion of the chain corresponds to 58 to 67 (YFKQLHTPTN). The chain crosses the membrane as a helical span at residues 68–88 (LLILSMAVTDFLLGFTIMPYS). Residues 89–106 (MVRSVENCWYFGLTFCKI) lie on the Extracellular side of the membrane. Residues 107 to 127 (HYSFDLMLSITSIFHLCSVAV) traverse the membrane as a helical segment. The Cytoplasmic segment spans residues 128–150 (DRFYAICHPLHYCTKMTIPVVRR). Residues 151–171 (LLLVCWSVPGAFAFGVVFSEA) form a helical membrane-spanning segment. Residues 172 to 195 (YADGIEGYDILVACSSSCPVMFNK) are Extracellular-facing. Residues 196 to 216 (LWGTTLFVAGFFTPSSMMVGI) form a helical membrane-spanning segment. Topologically, residues 217-251 (YGKIFAVSKKHARVIDNLPENQNNQMRKDKKAAKT) are cytoplasmic. Residues 252–272 (LGIVMGVFLLCWFPCFFTILL) form a helical membrane-spanning segment. Residues 273-287 (DPFLNFSTPAVLFDA) lie on the Extracellular side of the membrane. An N-linked (GlcNAc...) asparagine glycan is attached at N277. Residues 288 to 310 (LTWFGYFNSTCNPLIYGFFYPWF) traverse the membrane as a helical segment. At 311–339 (RRALKYILLGKIFSSHFHNTNLFTQKETE) the chain is on the cytoplasmic side.

It belongs to the G-protein coupled receptor 1 family. Mainly expressed in neurons of the olfactory epithelium. Also present in the limbic brain areas receiving projection from the olfactory system and several brain regions, including the hippocampus, cerebellum, cortex, raphe nuclei, hypothalamus and habenula.

It localises to the cell membrane. Its function is as follows. Orphan olfactory receptor specific for trace amines. Trace amine compounds are enriched in animal body fluids and act on trace amine-associated receptors (TAARs) to elicit both intraspecific and interspecific innate behaviors. Ligand-binding causes a conformation change that triggers signaling via the G(s)-class of G-proteins which activate adenylate cyclase. May also be required to provide olfactory input into limbic brain areas to regulate emotional behaviors likely via modulation of the dopamine system. In Mus musculus (Mouse), this protein is Trace amine-associated receptor 2.